A 1458-amino-acid chain; its full sequence is Secretory phospholipase A2 receptor (1458 aa).

A signal peptide spans 1–23; that stretch reads MLLSLLLLLLLGAPRRCTEGAAA. The Extracellular portion of the chain corresponds to 24–1393; sequence ALSPERVLKW…EHPGKGPSHS (1370 aa). Cystine bridges form between C49–C62, C87–C104, C176–C202, C190–C217, C258–C352, C328–C344, C404–C499, C476–C491, C615–C632, C697–C794, C772–C786, C838–C935, C912–C927, C1065–C1085, C1207–C1221, C1278–C1373, and C1350–C1365. The Ricin B-type lectin domain occupies 49–113; the sequence is CIQAGKSVLT…CDSTHVSLRW (65 aa). N-linked (GlcNAc...) asparagine glycosylation is present at N91. The region spanning 171–219 is the Fibronectin type-II domain; sequence AHGTPCMFPFQYNHQWHHECTREGRQDDSLWCATTSRYERDEKWGFCPD. C-type lectin domains are found at residues 227–356, 374–502, 511–645, 660–798, 815–939, 954–1098, 1117–1231, and 1243–1376; these read CDAV…KKYL, TDCE…CKKP, SGCQ…KQPV, HPCY…KIPR, LFHQ…KRKT, GTCP…EKIQ, LEYG…AICH, and ELCS…CKMK. N408, N431, and N452 each carry an N-linked (GlcNAc...) asparagine glycan. A helical membrane pass occupies residues 1394 to 1416; the sequence is IVPLAVALTLVVILAIITLSFYI. Over 1417 to 1458 the chain is Cytoplasmic; sequence YKQNKGFFRRLAGVGNSYYPTTNFSTIHLEENILISDLEKND. The Endocytosis signal signature appears at 1432 to 1438; sequence NSYYPTT.

Interacts with sPLA2-IB/PLA2G1B; this interaction mediates intracellular signaling as well as clearance of extracellular sPLA2-IB/PLA2G1B via endocytotic pathway. Interacts with sPLA2-X/PLA2G10; this interaction mediates sPLA2-X/PLA2G10 clearance and inactivation. In terms of processing, the secretory phospholipase A2 receptor form may be produced by the action of metalloproteinases. It contains all extracellular domains and only lacks transmembrane and cytosolic regions. It is however unclear whether this form is produced by proteolytic cleavage as suggested by some experiments, or by alternative splicing. As to expression, lung, skeletal muscle, brain, kidney and heart.

The protein resides in the cell membrane. It localises to the secreted. Its function is as follows. Receptor for secretory phospholipase A2 (sPLA2). Also able to bind to snake PA2-like toxins. Although its precise function remains unclear, binding of sPLA2 to its receptor participates in both positive and negative regulation of sPLA2 functions as well as clearance of sPLA2. Binding of sPLA2-IB/PLA2G1B induces various effects depending on the cell type, such as activation of the mitogen-activated protein kinase (MAPK) cascade to induce cell proliferation, the production of lipid mediators, selective release of arachidonic acid in bone marrow-derived mast cells. In neutrophils, binding of sPLA2-IB/PLA2G1B can activate p38 MAPK to stimulate elastase release and cell adhesion. May be involved in responses in pro-inflammatory cytokine productions during endotoxic shock. Also has endocytic properties and rapidly internalizes sPLA2 ligands, which is particularly important for the clearance of extracellular sPLA2s to protect their potent enzymatic activities. The soluble secretory phospholipase A2 receptor form is circulating and acts as a negative regulator of sPLA2 functions by blocking the biological functions of sPLA2-IB/PLA2G1B and sPLA2-X/PLA2G10. The protein is Secretory phospholipase A2 receptor (PLA2R1) of Oryctolagus cuniculus (Rabbit).